The chain runs to 284 residues: Protein phosphatase 1 regulatory subunit 3B (284 aa).

Positions 61 to 64 match the PP1-binding motif motif; it reads RVSF. Residues 124 to 232 form the CBM21 domain; sequence RNRLQTNHVC…SNKGKNYRIT (109 aa). The residue at position 260 (Ser260) is a Phosphoserine.

In terms of assembly, interacts with glycogen, PPP1CC catalytic subunit of PP1 and PYGL. Associates with glycogen particles. Forms complexes with debranching enzyme, glycogen phosphorylase, glycogen synthase and phosphorylase kinase which is necessary for its regulation of PP1 activity. In terms of tissue distribution, highly expressed in liver (at protein level). Expressed predominantly in liver. Expressed moderately in heart. Expressed weakly in prostate, stomach, thyroid, lung, kidney, spleen and skeletal muscle.

In terms of biological role, acts as a glycogen-targeting subunit for phosphatase PP1. Facilitates interaction of the PP1 with enzymes of the glycogen metabolism and regulates its activity. Suppresses the rate at which PP1 dephosphorylates (inactivates) glycogen phosphorylase and enhances the rate at which it activates glycogen synthase and therefore limits glycogen breakdown. Its activity is inhibited by PYGL, resulting in inhibition of the glycogen synthase and glycogen phosphorylase phosphatase activities of PP1. Dramatically increases basal and insulin-stimulated glycogen synthesis upon overexpression in hepatocytes. This is Protein phosphatase 1 regulatory subunit 3B (Ppp1r3b) from Mus musculus (Mouse).